The sequence spans 266 residues: 3-methyl-2-oxobutanoate hydroxymethyltransferase (266 aa).

Mg(2+) is bound by residues D45 and D84. 3-methyl-2-oxobutanoate is bound by residues D45 to S46, D84, and K112. E114 is a Mg(2+) binding site. E181 (proton acceptor) is an active-site residue.

Belongs to the PanB family. As to quaternary structure, homodecamer; pentamer of dimers. It depends on Mg(2+) as a cofactor.

It localises to the cytoplasm. The enzyme catalyses 3-methyl-2-oxobutanoate + (6R)-5,10-methylene-5,6,7,8-tetrahydrofolate + H2O = 2-dehydropantoate + (6S)-5,6,7,8-tetrahydrofolate. The protein operates within cofactor biosynthesis; (R)-pantothenate biosynthesis; (R)-pantoate from 3-methyl-2-oxobutanoate: step 1/2. In terms of biological role, catalyzes the reversible reaction in which hydroxymethyl group from 5,10-methylenetetrahydrofolate is transferred onto alpha-ketoisovalerate to form ketopantoate. This is 3-methyl-2-oxobutanoate hydroxymethyltransferase from Pseudomonas fluorescens (strain Pf0-1).